The primary structure comprises 515 residues: Endoglucanase 2 (515 aa).

Residues 1 to 31 form the signal peptide; that stretch reads MVAKPRSRCCCCSVFIGVIILIAIIIAVIFT. A glycan (N-linked (GlcNAc...) asparagine) is linked at N37. D100 (nucleophile) is an active-site residue. N-linked (GlcNAc...) asparagine glycosylation occurs at N250. H433 is a catalytic residue. N475 carries N-linked (GlcNAc...) asparagine glycosylation. The active site involves D480. N483 is a glycosylation site (N-linked (GlcNAc...) asparagine). The active site involves E489.

Belongs to the glycosyl hydrolase 9 (cellulase E) family.

Its subcellular location is the secreted. It catalyses the reaction Endohydrolysis of (1-&gt;4)-beta-D-glucosidic linkages in cellulose, lichenin and cereal beta-D-glucans.. The sequence is that of Endoglucanase 2 from Arabidopsis thaliana (Mouse-ear cress).